The sequence spans 213 residues: Ribonuclease HII (213 aa).

The 189-residue stretch at 25 to 213 (KTLCGVDEAG…FKPVKQLLPH (189 aa)) folds into the RNase H type-2 domain. Residues Asp31, Glu32, and Asp124 each contribute to the a divalent metal cation site.

It belongs to the RNase HII family. The cofactor is Mn(2+). Mg(2+) serves as cofactor.

Its subcellular location is the cytoplasm. It carries out the reaction Endonucleolytic cleavage to 5'-phosphomonoester.. Endonuclease that specifically degrades the RNA of RNA-DNA hybrids. In Magnetococcus marinus (strain ATCC BAA-1437 / JCM 17883 / MC-1), this protein is Ribonuclease HII.